We begin with the raw amino-acid sequence, 99 residues long: Cell cycle protein GpsB (99 aa).

Residues 34-71 are a coiled coil; the sequence is LDMIIKDYETFHQEIEELQQENLQLKKQLEEASKKQPV.

It belongs to the GpsB family. In terms of assembly, forms polymers through the coiled coil domains. Interacts with PBP1, MreC and EzrA.

The protein resides in the cytoplasm. Its function is as follows. Divisome component that associates with the complex late in its assembly, after the Z-ring is formed, and is dependent on DivIC and PBP2B for its recruitment to the divisome. Together with EzrA, is a key component of the system that regulates PBP1 localization during cell cycle progression. Its main role could be the removal of PBP1 from the cell pole after pole maturation is completed. Also contributes to the recruitment of PBP1 to the division complex. Not essential for septum formation. The sequence is that of Cell cycle protein GpsB from Bacillus velezensis (strain DSM 23117 / BGSC 10A6 / LMG 26770 / FZB42) (Bacillus amyloliquefaciens subsp. plantarum).